The chain runs to 45 residues: Cytochrome b559 subunit beta (45 aa).

The helical transmembrane segment at 20–36 (WLALHTLGIPTVFFLGA) threads the bilayer. Histidine 24 contacts heme.

It belongs to the PsbE/PsbF family. In terms of assembly, heterodimer of an alpha subunit and a beta subunit. PSII is composed of 1 copy each of membrane proteins PsbA, PsbB, PsbC, PsbD, PsbE, PsbF, PsbH, PsbI, PsbJ, PsbK, PsbL, PsbM, PsbT, PsbX, PsbY, PsbZ, Psb30/Ycf12, peripheral proteins PsbO, CyanoQ (PsbQ), PsbU, PsbV and a large number of cofactors. It forms dimeric complexes. It depends on heme b as a cofactor.

It is found in the cellular thylakoid membrane. This b-type cytochrome is tightly associated with the reaction center of photosystem II (PSII). PSII is a light-driven water:plastoquinone oxidoreductase that uses light energy to abstract electrons from H(2)O, generating O(2) and a proton gradient subsequently used for ATP formation. It consists of a core antenna complex that captures photons, and an electron transfer chain that converts photonic excitation into a charge separation. The polypeptide is Cytochrome b559 subunit beta (Synechococcus sp. (strain CC9902)).